We begin with the raw amino-acid sequence, 360 residues long: Endolytic peptidoglycan transglycosylase RlpA (360 aa).

A signal peptide spans 1–17; it reads MRKEWLWVGIASVLLSA. Cysteine 18 carries the N-palmitoyl cysteine lipid modification. The S-diacylglycerol cysteine moiety is linked to residue cysteine 18. The SPOR domain maps to 283–359; it reads SAISGGYVVQ…AQQQSFIVAA (77 aa).

It belongs to the RlpA family.

It is found in the cell membrane. Its function is as follows. Lytic transglycosylase with a strong preference for naked glycan strands that lack stem peptides. The chain is Endolytic peptidoglycan transglycosylase RlpA from Yersinia pestis.